The primary structure comprises 334 residues: Acryloyl-coenzyme A reductase (334 aa).

C38 serves as a coordination point for Zn(2+). Y39 provides a ligand contact to NADP(+). Residues H60, D90, C93, C96, C104, and C146 each contribute to the Zn(2+) site. NADP(+) is bound by residues 173–176 (SGGV) and 195–197 (TTS).

The protein belongs to the zinc-containing alcohol dehydrogenase family. In terms of assembly, monomer. It depends on Zn(2+) as a cofactor.

It carries out the reaction propanoyl-CoA + NADP(+) = acryloyl-CoA + NADPH + H(+). In terms of biological role, plays a role in autotrophic carbon fixation via the 3-hydroxypropionate/4-hydroxybutyrate cycle. Catalyzes the acryloyl-CoA dependent NADPH oxidation and formation of propionyl-CoA. Inactive towards 3-hydroxypropionyl-CoA, NADH and crotonyl-CoA. This chain is Acryloyl-coenzyme A reductase, found in Sulfurisphaera tokodaii (strain DSM 16993 / JCM 10545 / NBRC 100140 / 7) (Sulfolobus tokodaii).